We begin with the raw amino-acid sequence, 324 residues long: COP9 signalosome complex subunit 6 (324 aa).

Residues 38–171 (VALHPLVILN…VSVFESVIDI (134 aa)) enclose the MPN domain.

The protein belongs to the peptidase M67A family. CSN6 subfamily. As to quaternary structure, component of the CSN complex, composed of COPS1/GPS1, COPS2, COPS3, COPS4, COPS5, COPS6, COPS7 (COPS7A or COPS7B), COPS8 and COPS9. In the complex, it probably interacts directly with COPS2, COPS4, COPS5, COPS7 (COPS7A or COPS7B) and COPS9. Interacts with the translation initiation factor EIF3S6. Interacts weakly with RBX1. Directly interacts with COP1 and 14-3-3 protein sigma/SFN. Interacts with ERCC6.

The protein resides in the cytoplasm. The protein localises to the nucleus. Functionally, component of the COP9 signalosome complex (CSN), a complex involved in various cellular and developmental processes. The CSN complex is an essential regulator of the ubiquitin (Ubl) conjugation pathway by mediating the deneddylation of the cullin subunits of SCF-type E3 ligase complexes, leading to decrease the Ubl ligase activity of SCF-type complexes such as SCF, CSA or DDB2. The complex is also involved in phosphorylation of p53/TP53, c-jun/JUN, IkappaBalpha/NFKBIA, ITPK1 and IRF8, possibly via its association with CK2 and PKD kinases. CSN-dependent phosphorylation of TP53 and JUN promotes and protects degradation by the Ubl system, respectively. Has some glucocorticoid receptor-responsive activity. Stabilizes COP1 through reducing COP1 auto-ubiquitination and decelerating COP1 turnover rate, hence regulates the ubiquitination of COP1 targets, including SFN. The chain is COP9 signalosome complex subunit 6 (COPS6) from Bos taurus (Bovine).